We begin with the raw amino-acid sequence, 210 residues long: Ion-translocating oxidoreductase complex subunit G (210 aa).

A helical membrane pass occupies residues 9–29 (GVTLAVFAAITTGLTAVINAV). Threonine 175 carries the FMN phosphoryl threonine modification.

Belongs to the RnfG family. The complex is composed of six subunits: RnfA, RnfB, RnfC, RnfD, RnfE and RnfG. Requires FMN as cofactor.

Its subcellular location is the cell inner membrane. Part of a membrane-bound complex that couples electron transfer with translocation of ions across the membrane. This is Ion-translocating oxidoreductase complex subunit G from Erwinia tasmaniensis (strain DSM 17950 / CFBP 7177 / CIP 109463 / NCPPB 4357 / Et1/99).